The following is a 212-amino-acid chain: Histidine biosynthesis bifunctional protein HisIE (212 aa).

Positions Met-1–Ile-109 are phosphoribosyl-AMP cyclohydrolase. The tract at residues Phe-110 to Asp-212 is phosphoribosyl-ATP pyrophosphohydrolase.

It in the N-terminal section; belongs to the PRA-CH family. This sequence in the C-terminal section; belongs to the PRA-PH family.

It localises to the cytoplasm. The enzyme catalyses 1-(5-phospho-beta-D-ribosyl)-ATP + H2O = 1-(5-phospho-beta-D-ribosyl)-5'-AMP + diphosphate + H(+). It carries out the reaction 1-(5-phospho-beta-D-ribosyl)-5'-AMP + H2O = 1-(5-phospho-beta-D-ribosyl)-5-[(5-phospho-beta-D-ribosylamino)methylideneamino]imidazole-4-carboxamide. The protein operates within amino-acid biosynthesis; L-histidine biosynthesis; L-histidine from 5-phospho-alpha-D-ribose 1-diphosphate: step 2/9. It participates in amino-acid biosynthesis; L-histidine biosynthesis; L-histidine from 5-phospho-alpha-D-ribose 1-diphosphate: step 3/9. In Lactococcus lactis subsp. lactis (strain IL1403) (Streptococcus lactis), this protein is Histidine biosynthesis bifunctional protein HisIE (hisI).